The primary structure comprises 80 residues: uncharacterized protein (80 aa).

The next 2 membrane-spanning stretches (helical) occupy residues 15–35 and 45–65; these read ALGLTLLYLAVWLVAAYLSGV and WFEMACILTPLLFIGLCWAMV.

To H.influenzae HI_0974B.

The protein resides in the cell membrane. This is an uncharacterized protein from Escherichia coli (strain K12).